We begin with the raw amino-acid sequence, 554 residues long: Glypican-1 (554 aa).

A signal peptide spans 1 to 21; sequence MERLCWGWWWHLGILCLMHWA. 7 disulfide bridges follow: Cys-32–Cys-68, Cys-62–Cys-256, Cys-69–Cys-259, Cys-191–Cys-343, Cys-246–Cys-279, Cys-268–Cys-415, and Cys-272–Cys-401. 2 N-linked (GlcNAc...) asparagine glycosylation sites follow: Asn-79 and Asn-116. A disordered region spans residues 346–369; sequence PKKTNKGSKSEERRRKGKATQEDK. The segment covering 353–369 has biased composition (basic and acidic residues); sequence SKSEERRRKGKATQEDK. Residues Ser-486, Ser-488, and Ser-490 are each glycosylated (O-linked (Xyl...) (heparan sulfate) serine).

The protein belongs to the glypican family. Post-translationally, O-glycosylated with heparan sulfate side chains.

It is found in the cell membrane. Its subcellular location is the secreted. The protein resides in the extracellular space. Its function is as follows. Cell surface proteoglycan that bears heparan sulfate. In Xenopus tropicalis (Western clawed frog), this protein is Glypican-1 (gpc1).